The sequence spans 485 residues: REST corepressor 1 (485 aa).

Disordered regions lie at residues 1–26 (MPAM…ASAS) and 49–110 (AAAS…VGPQ). Composition is skewed to low complexity over residues 49–64 (AAAS…AAAA) and 74–95 (AAAA…SGSS). Positions 78–257 (PNGNSSSNSW…RHARKQKRER (180 aa)) are interaction with HDAC1. The 87-residue stretch at 103 to 189 (GGMRVGPQYQ…KSLADLPNFT (87 aa)) folds into the ELM2 domain. Residue lysine 122 forms a Glycyl lysine isopeptide (Lys-Gly) (interchain with G-Cter in SUMO2) linkage. At serine 127 the chain carries Phosphoserine. The 52-residue stretch at 190-241 (PFPDEWTVEDKVLFEQAFSFHGKTFHRIQQMLPDKSIASLVKFYYSWKKTRT) folds into the SANT 1 domain. A coiled-coil region spans residues 244 to 273 (SVMDRHARKQKREREESEDELEEANGNNPI). The interval 244-314 (SVMDRHARKQ…AKNRAKRKPP (71 aa)) is disordered. At serine 260 the chain carries Phosphoserine. Residues 278-288 (DQNKESKKEVP) show a composition bias toward basic and acidic residues. An interaction with KDM1A region spans residues 296-384 (VKKEKHSTQA…LPEVIQKCNA (89 aa)). Lysine 297 participates in a covalent cross-link: Glycyl lysine isopeptide (Lys-Gly) (interchain with G-Cter in SUMO2). Positions 334–369 (ATTVLRQLDMELVSVKRQIQNIKQTNSALKEKLDGG) form a coiled coil. In terms of domain architecture, SANT 2 spans 381-432 (KCNARWTTEEQLLAVQAIRKYGRDFQAISDVIGNKSVVQVKNFFVNYRRRFN). The disordered stretch occupies residues 442–485 (AEHGKEETNGPSNQKPVKSPDNSIKMPEEEDEAPVLDVRYASAS). The span at 450–463 (NGPSNQKPVKSPDN) shows a compositional bias: polar residues. Position 460 is a phosphoserine (serine 460). Residue lysine 466 forms a Glycyl lysine isopeptide (Lys-Gly) (interchain with G-Cter in SUMO2) linkage.

Belongs to the CoREST family. As to quaternary structure, interacts directly with GFI1 and GFI1B in a RCOR/GFI/KDM1A/HDAC complex. Interacts with INMS1. Component of a BHC histone deacetylase complex that contains HDAC1, HDAC2, HMG20B/BRAF35, KDM1A, RCOR1/CoREST and PHF21A/BHC80. The BHC complex may also contain ZMYM2, ZNF217, ZMYM3, GSE1 and GTF2I. Interacts with REST. Interacts with the SMARCE1/BAF57, suggesting that the BHC complex may recruit the ATP-dependent chromatin-remodeling SWI-SNF complex. Interacts with SOX2. (Microbial infection) Interacts with herpes virus HSV-1 ICP0 protein; the interaction leads to the disruption of the BHC complex, thereby preventing the BHC complex from repressing transcription of viral genes. In terms of processing, phosphorylated by HSV-1 protein kinases in case of infection. As to expression, ubiquitously expressed.

The protein resides in the nucleus. Essential component of the BHC complex, a corepressor complex that represses transcription of neuron-specific genes in non-neuronal cells. The BHC complex is recruited at RE1/NRSE sites by REST and acts by deacetylating and demethylating specific sites on histones, thereby acting as a chromatin modifier. In the BHC complex, it serves as a molecular beacon for the recruitment of molecular machinery, including MeCP2 and SUV39H1, that imposes silencing across a chromosomal interval. Plays a central role in demethylation of Lys-4 of histone H3 by promoting demethylase activity of KDM1A on core histones and nucleosomal substrates. It also protects KDM1A from the proteasome. Component of a RCOR/GFI/KDM1A/HDAC complex that suppresses, via histone deacetylase (HDAC) recruitment, a number of genes implicated in multilineage blood cell development and controls hematopoietic differentiation. This chain is REST corepressor 1 (RCOR1), found in Homo sapiens (Human).